The chain runs to 144 residues: Large ribosomal subunit protein uL16 (144 aa).

The protein belongs to the universal ribosomal protein uL16 family. In terms of assembly, part of the 50S ribosomal subunit.

In terms of biological role, binds 23S rRNA and is also seen to make contacts with the A and possibly P site tRNAs. The sequence is that of Large ribosomal subunit protein uL16 from Halothermothrix orenii (strain H 168 / OCM 544 / DSM 9562).